The sequence spans 112 residues: Ribonuclease VapC8 (112 aa).

A PINc domain is found at 10–109; sequence LLDTSVFIAR…TDALIAATAE (100 aa). Mg(2+)-binding residues include Asp12 and Asp101.

Belongs to the PINc/VapC protein family. Mg(2+) serves as cofactor.

Its function is as follows. Toxic component of a type II toxin-antitoxin (TA) system. An RNase. The cognate antitoxin is VapB8. The chain is Ribonuclease VapC8 (vapC8) from Mycobacterium tuberculosis (strain CDC 1551 / Oshkosh).